Here is a 137-residue protein sequence, read N- to C-terminus: Ribosomal RNA large subunit methyltransferase H (137 aa).

Residues Leu-56, Gly-85, and 104-109 contribute to the S-adenosyl-L-methionine site; that span reads LSPLTF.

This sequence belongs to the RNA methyltransferase RlmH family. In terms of assembly, homodimer.

The protein localises to the cytoplasm. It carries out the reaction pseudouridine(1915) in 23S rRNA + S-adenosyl-L-methionine = N(3)-methylpseudouridine(1915) in 23S rRNA + S-adenosyl-L-homocysteine + H(+). Specifically methylates the pseudouridine at position 1915 (m3Psi1915) in 23S rRNA. The polypeptide is Ribosomal RNA large subunit methyltransferase H (Prochlorococcus marinus (strain MIT 9515)).